The chain runs to 240 residues: Agamous-like MADS-box protein AGL16 (240 aa).

The region spanning 1–61 (MGRGKIAIKR…GRLYDFSSSS (61 aa)) is the MADS-box domain. The 91-residue stretch at 86–176 (IQFWQKEAAI…HKKVNLMHQQ (91 aa)) folds into the K-box domain.

Homodimer. Interacts with AGL15, AGL24, AP1, AGL6, AG, AGL1, AGL11, AGL5, SEP3, SEP1, AGL63, AGL14, SOC1 and AGL21. Interacts with AGL63. Interacts with SVP. As to expression, expressed at high levels in leaves, moderate levels in roots, seedlings and stems, and at low levels in flowers, pollen and siliques. Accumulates in leaf guard cells and trichomes. Also present in epidermal cells of roots. Expressed in mature guard cells.

It is found in the nucleus. In terms of biological role, probable transcription factor involved in the regulation of flowering time in long-day photoperiod. Participates in the repression of FT expression and floral transition, by interacting closely with the FLC-SVP pathways. Functions in the satellite meristemoid lineage of stomatal development. In Arabidopsis thaliana (Mouse-ear cress), this protein is Agamous-like MADS-box protein AGL16 (AGL16).